The primary structure comprises 312 residues: Porphobilinogen deaminase (312 aa).

Cysteine 241 is modified (S-(dipyrrolylmethanemethyl)cysteine).

It belongs to the HMBS family. In terms of assembly, monomer. Requires dipyrromethane as cofactor.

The catalysed reaction is 4 porphobilinogen + H2O = hydroxymethylbilane + 4 NH4(+). It participates in porphyrin-containing compound metabolism; protoporphyrin-IX biosynthesis; coproporphyrinogen-III from 5-aminolevulinate: step 2/4. Its pathway is porphyrin-containing compound metabolism; chlorophyll biosynthesis. Functionally, tetrapolymerization of the monopyrrole PBG into the hydroxymethylbilane pre-uroporphyrinogen in several discrete steps. The polypeptide is Porphobilinogen deaminase (Chlorobaculum tepidum (strain ATCC 49652 / DSM 12025 / NBRC 103806 / TLS) (Chlorobium tepidum)).